The chain runs to 240 residues: Lactate utilization protein C (240 aa).

This sequence belongs to the LutC/YkgG family.

In terms of biological role, is involved in L-lactate degradation and allows cells to grow with lactate as the sole carbon source. The sequence is that of Lactate utilization protein C from Bacillus licheniformis (strain ATCC 14580 / DSM 13 / JCM 2505 / CCUG 7422 / NBRC 12200 / NCIMB 9375 / NCTC 10341 / NRRL NRS-1264 / Gibson 46).